The sequence spans 187 residues: Orotate phosphoribosyltransferase (187 aa).

Residues arginine 99, lysine 100, lysine 103, histidine 105, and 125–133 each bind 5-phospho-alpha-D-ribose 1-diphosphate; that span reads DDVITTGGS. Residues threonine 129 and arginine 157 each coordinate orotate.

The protein belongs to the purine/pyrimidine phosphoribosyltransferase family. PyrE subfamily. As to quaternary structure, homodimer. Requires Mg(2+) as cofactor.

The catalysed reaction is orotidine 5'-phosphate + diphosphate = orotate + 5-phospho-alpha-D-ribose 1-diphosphate. It participates in pyrimidine metabolism; UMP biosynthesis via de novo pathway; UMP from orotate: step 1/2. Catalyzes the transfer of a ribosyl phosphate group from 5-phosphoribose 1-diphosphate to orotate, leading to the formation of orotidine monophosphate (OMP). The sequence is that of Orotate phosphoribosyltransferase from Leptospira borgpetersenii serovar Hardjo-bovis (strain L550).